The following is a 241-amino-acid chain: MHLCALLIAAAGVLASVRANYVEIDAYTVKPFAQQKPSTDSERSALKYKPHLHVQAGCHPYPAVQRDGSLSAGFEWKEKNSQPCGRSPLGSQVYSRSNWYKEKWAIMYAWYFPKASNHIGRGVSGSRHYWLYAIVWTDDANPTNSSLLGVTLSAGIGLSKHTKLKSKHVIDGTTLKLKSHLSFWGRRLALKFTNKLGETQDLITWEQLPPEAQTALTLDYKLNTPLQDFRFEDLLKEAYPF.

Residues 1-19 (MHLCALLIAAAGVLASVRA) form the signal peptide. Residues 105-115 (AIMYAWYFPKA) carry the Conserved undecapeptide motif motif. Residues 125–131 (GSRHYWL) carry the Conserved heptapeptide motif motif. The N-linked (GlcNAc...) asparagine glycan is linked to N144.

The protein belongs to the Necrosis inducing protein (NPP1) family.

It is found in the secreted. Functionally, secreted effector that acts as a pathogen-associated molecular pattern (PAMP) recognized by the plant immune system. Induces necrosis in Nicotiana benthamiana leaves and can induce Phytophthora capsici resistance in Nicotiana benthamiana. Also significantly improves disease resistance of Arabidopsis thaliana to Hyaloperonospora arabidopsidis. causes an inhibition of plant growth which is typically associated with enhanced immunity when over-expressed in Arabidopsis. The chain is NLP effector protein 7 from Plasmopara viticola (Downy mildew of grapevine).